A 455-amino-acid polypeptide reads, in one-letter code: GTPase Der (455 aa).

EngA-type G domains follow at residues 4 to 169 (PVVA…PPKD) and 178 to 353 (IQLS…EQHR). GTP contacts are provided by residues 10–17 (GRPNVGKS), 57–61 (DTGGL), 120–123 (NKCE), 184–191 (GRPNVGKS), 231–235 (DTAGI), and 296–299 (NKWD). Positions 354–439 (RRVSTSVVNE…PVKLFWRGKQ (86 aa)) constitute a KH-like domain.

Belongs to the TRAFAC class TrmE-Era-EngA-EngB-Septin-like GTPase superfamily. EngA (Der) GTPase family. In terms of assembly, associates with the 50S ribosomal subunit.

GTPase that plays an essential role in the late steps of ribosome biogenesis. The polypeptide is GTPase Der (Synechococcus sp. (strain CC9311)).